We begin with the raw amino-acid sequence, 173 residues long: Ribosome maturation factor RimM (173 aa).

Positions 102–173 (EGEYYWSDLI…TMLVDWDPEF (72 aa)) constitute a PRC barrel domain.

It belongs to the RimM family. In terms of assembly, binds ribosomal protein uS19.

It localises to the cytoplasm. In terms of biological role, an accessory protein needed during the final step in the assembly of 30S ribosomal subunit, possibly for assembly of the head region. Essential for efficient processing of 16S rRNA. May be needed both before and after RbfA during the maturation of 16S rRNA. It has affinity for free ribosomal 30S subunits but not for 70S ribosomes. The protein is Ribosome maturation factor RimM of Methylobacillus flagellatus (strain ATCC 51484 / DSM 6875 / VKM B-1610 / KT).